The sequence spans 102 residues: PE family immunomodulator PE15 (102 aa).

A PE domain is found at Leu3–Ala91.

This sequence belongs to the mycobacterial PE family.

The protein resides in the secreted. It is found in the cell envelope. The protein localises to the cell surface. Functionally, may play a pivotal role in the evasion of host immune response by M.tuberculosis. Mediates production of IL-10 via activation of the p38 and ERK1/2 mitogen-activated protein kinase (MAPK) signaling pathways. This is PE family immunomodulator PE15 (PE15) from Mycobacterium tuberculosis (strain CDC 1551 / Oshkosh).